The following is a 657-amino-acid chain: Probable Xaa-Pro aminopeptidase P (657 aa).

Residues D453, D464, E562, and E576 each contribute to the Mn(2+) site.

It belongs to the peptidase M24B family. The cofactor is Mn(2+).

It catalyses the reaction Release of any N-terminal amino acid, including proline, that is linked to proline, even from a dipeptide or tripeptide.. Functionally, catalyzes the removal of a penultimate prolyl residue from the N-termini of peptides. In Talaromyces stipitatus (strain ATCC 10500 / CBS 375.48 / QM 6759 / NRRL 1006) (Penicillium stipitatum), this protein is Probable Xaa-Pro aminopeptidase P (ampp).